A 417-amino-acid chain; its full sequence is UDP-N-acetylglucosamine 1-carboxyvinyltransferase (417 aa).

22–23 (KN) serves as a coordination point for phosphoenolpyruvate. Arg93 is a binding site for UDP-N-acetyl-alpha-D-glucosamine. Cys117 (proton donor) is an active-site residue. Cys117 is modified (2-(S-cysteinyl)pyruvic acid O-phosphothioketal). Residues 122-126 (RPVDQ), Asp304, and Ile326 each bind UDP-N-acetyl-alpha-D-glucosamine.

It belongs to the EPSP synthase family. MurA subfamily.

The protein localises to the cytoplasm. It carries out the reaction phosphoenolpyruvate + UDP-N-acetyl-alpha-D-glucosamine = UDP-N-acetyl-3-O-(1-carboxyvinyl)-alpha-D-glucosamine + phosphate. The protein operates within cell wall biogenesis; peptidoglycan biosynthesis. Its function is as follows. Cell wall formation. Adds enolpyruvyl to UDP-N-acetylglucosamine. The polypeptide is UDP-N-acetylglucosamine 1-carboxyvinyltransferase (Laribacter hongkongensis (strain HLHK9)).